The sequence spans 226 residues: 7-cyano-7-deazaguanine synthase (226 aa).

ATP is bound at residue 9–19; that stretch reads YSGGLDSTTCL. The Zn(2+) site is built by cysteine 189, cysteine 199, cysteine 202, and cysteine 205.

This sequence belongs to the QueC family. The cofactor is Zn(2+).

The enzyme catalyses 7-carboxy-7-deazaguanine + NH4(+) + ATP = 7-cyano-7-deazaguanine + ADP + phosphate + H2O + H(+). It functions in the pathway purine metabolism; 7-cyano-7-deazaguanine biosynthesis. Catalyzes the ATP-dependent conversion of 7-carboxy-7-deazaguanine (CDG) to 7-cyano-7-deazaguanine (preQ(0)). In Pelobacter propionicus (strain DSM 2379 / NBRC 103807 / OttBd1), this protein is 7-cyano-7-deazaguanine synthase.